The following is a 494-amino-acid chain: Xylan glycosyltransferase MUCI21 (494 aa).

Residues 1-40 are Cytoplasmic-facing; it reads MRQNLKKVAQIKVDESKKLFPYVFRVKTSCGNCAKRSKPK. Residues 41–61 form a helical; Signal-anchor for type II membrane protein membrane-spanning segment; the sequence is LIYLLIFSLISSCFVFAPQLL. The Lumenal portion of the chain corresponds to 62–494; the sequence is CFPYPSALFL…LIDAYAKSIR (433 aa). N-linked (GlcNAc...) asparagine glycosylation occurs at N375.

It belongs to the glycosyltransferase 61 family.

It is found in the golgi apparatus membrane. Glycosyletransferase required for the proper composition and structural properties of released seed coat mucilage. Required for the production of highly branched xylan polymers in seed coat mucilage. Facilitates the addition of xylose residues directly to the xylan backbone. Xylan with xylose side chains seems to be necessary for pectin attachment to the seed surface. Essential for xylan synthesis in seed coat epidermal (SCE) cells. This Arabidopsis thaliana (Mouse-ear cress) protein is Xylan glycosyltransferase MUCI21.